The sequence spans 239 residues: Small ribosomal subunit protein uS2 (239 aa).

It belongs to the universal ribosomal protein uS2 family.

The protein is Small ribosomal subunit protein uS2 of Prochlorococcus marinus (strain MIT 9303).